The following is a 197-amino-acid chain: ATP-dependent Clp protease proteolytic subunit 1 (197 aa).

Residue serine 88 is the Nucleophile of the active site. Histidine 113 is a catalytic residue.

It belongs to the peptidase S14 family. Fourteen ClpP subunits assemble into 2 heptameric rings which stack back to back to give a disk-like structure with a central cavity, resembling the structure of eukaryotic proteasomes.

The protein localises to the cytoplasm. It catalyses the reaction Hydrolysis of proteins to small peptides in the presence of ATP and magnesium. alpha-casein is the usual test substrate. In the absence of ATP, only oligopeptides shorter than five residues are hydrolyzed (such as succinyl-Leu-Tyr-|-NHMec, and Leu-Tyr-Leu-|-Tyr-Trp, in which cleavage of the -Tyr-|-Leu- and -Tyr-|-Trp bonds also occurs).. Cleaves peptides in various proteins in a process that requires ATP hydrolysis. Has a chymotrypsin-like activity. Plays a major role in the degradation of misfolded proteins. This Leifsonia xyli subsp. xyli (strain CTCB07) protein is ATP-dependent Clp protease proteolytic subunit 1.